The chain runs to 697 residues: Potassium-transporting ATPase ATP-binding subunit (697 aa).

A run of 4 helical transmembrane segments spans residues 55-75 (PIMFVVEIGFIITFILSFLPS), 82-102 (GWFNITVSFILLFTVLFANFA), 245-265 (LTFIFLIVVVTLPIFTNYLGF), and 271-291 (VLVALLVCLIPTTIGGLLSAI). D324 acts as the 4-aspartylphosphate intermediate in catalysis. ATP contacts are provided by residues D361, E365, 393–400 (FKAETRMS), and K412. Positions 535 and 539 each coordinate Mg(2+). 3 consecutive transmembrane segments (helical) span residues 605–625 (FAIIPAMFTLAIPQMEALNIM), 633–653 (AILSALLFNAVIIPLLIPLAM), and 677–697 (GGVIVPFIGIKVIDMIVGLFI).

The protein belongs to the cation transport ATPase (P-type) (TC 3.A.3) family. Type IA subfamily. The system is composed of three essential subunits: KdpA, KdpB and KdpC.

It is found in the cell membrane. It carries out the reaction K(+)(out) + ATP + H2O = K(+)(in) + ADP + phosphate + H(+). Its function is as follows. Part of the high-affinity ATP-driven potassium transport (or Kdp) system, which catalyzes the hydrolysis of ATP coupled with the electrogenic transport of potassium into the cytoplasm. This subunit is responsible for energy coupling to the transport system and for the release of the potassium ions to the cytoplasm. This Bacillus cereus (strain AH187) protein is Potassium-transporting ATPase ATP-binding subunit.